The sequence spans 519 residues: Galactose-1-phosphate uridylyltransferase (519 aa).

It belongs to the galactose-1-phosphate uridylyltransferase type 2 family.

The protein localises to the cytoplasm. It carries out the reaction alpha-D-galactose 1-phosphate + UDP-alpha-D-glucose = alpha-D-glucose 1-phosphate + UDP-alpha-D-galactose. It functions in the pathway carbohydrate metabolism; galactose metabolism. The polypeptide is Galactose-1-phosphate uridylyltransferase (Caldanaerobacter subterraneus subsp. tengcongensis (strain DSM 15242 / JCM 11007 / NBRC 100824 / MB4) (Thermoanaerobacter tengcongensis)).